Consider the following 330-residue polypeptide: Short chain dehydrogenase macD (330 aa).

NADP(+)-binding residues include Lys-57, Asp-86, Asn-113, Tyr-204, and Lys-208. Tyr-204 serves as the catalytic Proton donor. Lys-208 (lowers pKa of active site Tyr) is an active-site residue.

It belongs to the short-chain dehydrogenases/reductases (SDR) family.

Its pathway is secondary metabolite biosynthesis; terpenoid biosynthesis. Its function is as follows. Short chain dehydrogenase; part of the gene cluster that mediates the biosynthesis of macrophorins, isoprenoid epoxycyclohexenones containing cyclized drimane moieties. The first step of the pathway is the synthesis of 6-methylsalicylic acid (6-MSA) by the polyketide synthase macA. 6-MSA is then converted to m-cresol by the decarboxylase macB. The cytochrome P450 monooxygenase macC then catalyzes the oxidation of m-cresol to toluquinol. Epoxidation of toluquinol is then performed by the short chain dehydrogenase macD, with the help of macE, and a further prenylation by macG leads to 7-deacetoxyyanuthone A. The next step is the hydroxylation of C-22 of 7-deacetoxyyanuthone A by the cytochrome P450 monooxygenase macH to yield 22-deacetylyanuthone A. O-Mevalon transferase macI then attaches mevalon to the hydroxyl group of 22-deacetylyanuthone A to produce yanuthone E. The terpene cyclase macJ catalyzes the cyclization of 22-deacetylyanuthone A to macrophorin A. MacJ is also able to catalyze cyclization of yanuthone E and 7-deacetoxyyanuthone A to their corresponding macrophorins. The macJ products can be further modified by macH and macJ, as well as by the FAD-dependent monooxygenase macF, to produce additional macrophorins, including 4'-oxomacrophorin A, 4'-oxomacrophorin D and 4'-oxomacrophorin E. In Penicillium terrestre, this protein is Short chain dehydrogenase macD.